The sequence spans 305 residues: GTPase Era (305 aa).

The region spanning 9-176 (KSGFISIIGR…LDTLPKYLPE (168 aa)) is the Era-type G domain. The G1 stretch occupies residues 17–24 (GRPNVGKS). 17 to 24 (GRPNVGKS) serves as a coordination point for GTP. Residues 43–47 (QTTRN) form a G2 region. The tract at residues 64-67 (DTPG) is G3. Residues 64–68 (DTPGI) and 126–129 (NKID) contribute to the GTP site. The segment at 126–129 (NKID) is G4. Positions 155–157 (ISA) are G5. The 80-residue stretch at 207–286 (TREEIPHSIA…YLELWVKVQK (80 aa)) folds into the KH type-2 domain.

This sequence belongs to the TRAFAC class TrmE-Era-EngA-EngB-Septin-like GTPase superfamily. Era GTPase family. In terms of assembly, monomer.

It localises to the cytoplasm. Its subcellular location is the cell membrane. Functionally, an essential GTPase that binds both GDP and GTP, with rapid nucleotide exchange. Plays a role in 16S rRNA processing and 30S ribosomal subunit biogenesis and possibly also in cell cycle regulation and energy metabolism. The sequence is that of GTPase Era from Lysinibacillus sphaericus (strain C3-41).